Reading from the N-terminus, the 484-residue chain is Protein nucleotidyltransferase YdiU (484 aa).

Residues Gly81, Gly83, Arg84, Lys103, Asp115, Gly116, Arg166, and Arg173 each coordinate ATP. The active-site Proton acceptor is the Asp244. Residues Asn245 and Asp254 each contribute to the Mg(2+) site. Asp254 contacts ATP.

This sequence belongs to the SELO family. Mg(2+) is required as a cofactor. It depends on Mn(2+) as a cofactor.

It carries out the reaction L-seryl-[protein] + ATP = 3-O-(5'-adenylyl)-L-seryl-[protein] + diphosphate. It catalyses the reaction L-threonyl-[protein] + ATP = 3-O-(5'-adenylyl)-L-threonyl-[protein] + diphosphate. The enzyme catalyses L-tyrosyl-[protein] + ATP = O-(5'-adenylyl)-L-tyrosyl-[protein] + diphosphate. The catalysed reaction is L-histidyl-[protein] + UTP = N(tele)-(5'-uridylyl)-L-histidyl-[protein] + diphosphate. It carries out the reaction L-seryl-[protein] + UTP = O-(5'-uridylyl)-L-seryl-[protein] + diphosphate. It catalyses the reaction L-tyrosyl-[protein] + UTP = O-(5'-uridylyl)-L-tyrosyl-[protein] + diphosphate. Functionally, nucleotidyltransferase involved in the post-translational modification of proteins. It can catalyze the addition of adenosine monophosphate (AMP) or uridine monophosphate (UMP) to a protein, resulting in modifications known as AMPylation and UMPylation. The polypeptide is Protein nucleotidyltransferase YdiU (Shewanella baltica (strain OS195)).